The primary structure comprises 130 residues: Small ribosomal subunit protein uS9 (130 aa).

The protein belongs to the universal ribosomal protein uS9 family.

The chain is Small ribosomal subunit protein uS9 from Chromobacterium violaceum (strain ATCC 12472 / DSM 30191 / JCM 1249 / CCUG 213 / NBRC 12614 / NCIMB 9131 / NCTC 9757 / MK).